Reading from the N-terminus, the 219-residue chain is Redox-sensing transcriptional repressor Rex (219 aa).

The segment at residues 17–56 (VYLRVLDNLVKRDIEVVSSKSLSKETGFTAEQIRKDLAFF) is a DNA-binding region (H-T-H motif). Position 91 to 96 (91 to 96 (GAGHLG)) interacts with NAD(+).

Belongs to the transcriptional regulatory Rex family. Homodimer.

It localises to the cytoplasm. In terms of biological role, modulates transcription in response to changes in cellular NADH/NAD(+) redox state. This is Redox-sensing transcriptional repressor Rex from Natranaerobius thermophilus (strain ATCC BAA-1301 / DSM 18059 / JW/NM-WN-LF).